Reading from the N-terminus, the 622-residue chain is Gamma tubulin complex adapter SPC72 (622 aa).

Disordered regions lie at residues 1–58 (MVRR…PALM) and 221–263 (DKEE…IHDS). The segment covering 228-238 (LAQSSPAGSQL) has biased composition (polar residues). The segment covering 239–250 (ESRDSPSSKEEN) has biased composition (basic and acidic residues).

As to quaternary structure, homooligomer. Interacts with CDC5, KAR1, KIN4, SPC97, SPC98, STU2 and TUB4. Post-translationally, phosphorylated by CDC5.

The protein resides in the cytoplasm. Its subcellular location is the cytoskeleton. The protein localises to the microtubule organizing center. It is found in the spindle pole body. Functionally, spindle pole body (SPB) component that acts as the gamma-tubulin complex-binding protein of the SPB outer plaque. Anchors cytoplasmic microtubules at the half bridge of the spindle pole body (SPB) and accordingly functions in nuclear position and spindle orientation, including anaphase spindle migration into the bud. Recruits KIN4 kinase to both SPBs when cytoplasmic microtubules are defective, to delay mitotic exit. Links cytoplasmic microtubules with spindle orientation checkpoint (SPOC) components and, therefore, could function as part of the sensors of spindle orientation defects. Required for cytoplasmic astral microtubule growth during mitosis. Is strictly required for mating and karyogamy. This Saccharomyces cerevisiae (strain ATCC 204508 / S288c) (Baker's yeast) protein is Gamma tubulin complex adapter SPC72 (SPC72).